The chain runs to 115 residues: Nucleoid-associated protein Ava_2322 (115 aa).

Belongs to the YbaB/EbfC family. As to quaternary structure, homodimer.

Its subcellular location is the cytoplasm. It is found in the nucleoid. Functionally, binds to DNA and alters its conformation. May be involved in regulation of gene expression, nucleoid organization and DNA protection. This Trichormus variabilis (strain ATCC 29413 / PCC 7937) (Anabaena variabilis) protein is Nucleoid-associated protein Ava_2322.